We begin with the raw amino-acid sequence, 222 residues long: Ribosomal RNA small subunit methyltransferase I (222 aa).

It belongs to the methyltransferase superfamily. RsmI family.

Its subcellular location is the cytoplasm. It carries out the reaction cytidine(1402) in 16S rRNA + S-adenosyl-L-methionine = 2'-O-methylcytidine(1402) in 16S rRNA + S-adenosyl-L-homocysteine + H(+). Its function is as follows. Catalyzes the 2'-O-methylation of the ribose of cytidine 1402 (C1402) in 16S rRNA. The chain is Ribosomal RNA small subunit methyltransferase I from Mycoplasmopsis pulmonis (strain UAB CTIP) (Mycoplasma pulmonis).